A 581-amino-acid chain; its full sequence is Potassium-transporting ATPase potassium-binding subunit (581 aa).

12 helical membrane passes run 2–22 (LQGW…TPFF), 74–94 (AVIA…PLNP), 135–155 (GLGY…IAFI), 177–197 (ILLP…VPET), 255–275 (LVQL…YGVF), 284–304 (LIYL…AIGE), 332–352 (WAQS…AVIA), 357–377 (LMPN…VFGG), 381–401 (GTAY…LMVG), 421–441 (FLIL…ALAF), 501–521 (LSAC…LLLL), and 550–570 (AGVI…LGPI).

Belongs to the KdpA family. In terms of assembly, the system is composed of three essential subunits: KdpA, KdpB and KdpC.

Its subcellular location is the cell inner membrane. Its function is as follows. Part of the high-affinity ATP-driven potassium transport (or Kdp) system, which catalyzes the hydrolysis of ATP coupled with the electrogenic transport of potassium into the cytoplasm. This subunit binds the periplasmic potassium ions and delivers the ions to the membrane domain of KdpB through an intramembrane tunnel. The chain is Potassium-transporting ATPase potassium-binding subunit from Microcystis aeruginosa (strain NIES-843 / IAM M-2473).